The primary structure comprises 156 residues: SsrA-binding protein (156 aa).

The protein belongs to the SmpB family.

The protein localises to the cytoplasm. Functionally, required for rescue of stalled ribosomes mediated by trans-translation. Binds to transfer-messenger RNA (tmRNA), required for stable association of tmRNA with ribosomes. tmRNA and SmpB together mimic tRNA shape, replacing the anticodon stem-loop with SmpB. tmRNA is encoded by the ssrA gene; the 2 termini fold to resemble tRNA(Ala) and it encodes a 'tag peptide', a short internal open reading frame. During trans-translation Ala-aminoacylated tmRNA acts like a tRNA, entering the A-site of stalled ribosomes, displacing the stalled mRNA. The ribosome then switches to translate the ORF on the tmRNA; the nascent peptide is terminated with the 'tag peptide' encoded by the tmRNA and targeted for degradation. The ribosome is freed to recommence translation, which seems to be the essential function of trans-translation. The sequence is that of SsrA-binding protein from Maricaulis maris (strain MCS10) (Caulobacter maris).